The sequence spans 157 residues: MAGMFRIPIAVVQIAAFVHQIHEYLFQVQMTSGPSMMPTLNSGGEFVLLDKLHGRFARSCSVGDVVVSAKPSDSKQHVCKRIIGMPGDTIYVDPTSSNKKITIPLGHVWLAGDNIAHSLDSRNYGPVPMGLIKAKVIARVWPHPHWMSNILNDIDVE.

Residues Ser35 and Lys80 contribute to the active site.

It belongs to the peptidase S26 family. IMP1 subfamily. In terms of assembly, heterodimer of 2 subunits, imp1 and imp2.

Its subcellular location is the mitochondrion inner membrane. Its function is as follows. Catalyzes the removal of transit peptides required for the targeting of proteins from the mitochondrial matrix, across the inner membrane, into the inter-membrane space. In Schizosaccharomyces pombe (strain 972 / ATCC 24843) (Fission yeast), this protein is Mitochondrial inner membrane protease subunit 1 (imp1).